Reading from the N-terminus, the 522-residue chain is Transactivator/viroplasmin protein (522 aa).

Positions 487–500 are enriched in basic and acidic residues; it reads KDASTDRGTTDKDG. Residues 487 to 522 are disordered; it reads KDASTDRGTTDKDGPPPTRSIVEKEDVPTTSSKQVD.

Belongs to the caulimoviridae viroplasmin family.

Its subcellular location is the host cytoplasm. Its function is as follows. Enhances the ribosomal termination-reinitiation event leading to the translation of major open reading frames on the polycistronic viral RNAs. In Arabidopsis thaliana (Mouse-ear cress), this protein is Transactivator/viroplasmin protein.